The following is a 259-amino-acid chain: Methyltransferase afvD (259 aa).

Belongs to the class I-like SAM-binding methyltransferase superfamily.

It functions in the pathway secondary metabolite biosynthesis. Methyltransferase; part of the gene cluster that mediates the biosynthesis of aflavarin, a bicoumarin that exhibits anti-insectan activity against the fungivorous beetle C.hemipterus. The polypeptide is Methyltransferase afvD (Aspergillus flavus (strain ATCC 200026 / FGSC A1120 / IAM 13836 / NRRL 3357 / JCM 12722 / SRRC 167)).